A 202-amino-acid polypeptide reads, in one-letter code: Recombination protein RecR (202 aa).

The C4-type zinc-finger motif lies at C61–C76. One can recognise a Toprim domain in the interval S84–P179.

The protein belongs to the RecR family.

In terms of biological role, may play a role in DNA repair. It seems to be involved in an RecBC-independent recombinational process of DNA repair. It may act with RecF and RecO. This is Recombination protein RecR from Bordetella avium (strain 197N).